The following is a 427-amino-acid chain: 3-phosphoshikimate 1-carboxyvinyltransferase (427 aa).

The 3-phosphoshikimate site is built by K20, S21, and R25. A phosphoenolpyruvate-binding site is contributed by K20. Phosphoenolpyruvate contacts are provided by G92 and R120. 3-phosphoshikimate is bound by residues S166, Q168, D312, and K339. Q168 lines the phosphoenolpyruvate pocket. Catalysis depends on D312, which acts as the Proton acceptor. Phosphoenolpyruvate is bound by residues R343 and R385.

This sequence belongs to the EPSP synthase family. Monomer.

The protein resides in the cytoplasm. The catalysed reaction is 3-phosphoshikimate + phosphoenolpyruvate = 5-O-(1-carboxyvinyl)-3-phosphoshikimate + phosphate. The protein operates within metabolic intermediate biosynthesis; chorismate biosynthesis; chorismate from D-erythrose 4-phosphate and phosphoenolpyruvate: step 6/7. Catalyzes the transfer of the enolpyruvyl moiety of phosphoenolpyruvate (PEP) to the 5-hydroxyl of shikimate-3-phosphate (S3P) to produce enolpyruvyl shikimate-3-phosphate and inorganic phosphate. In Streptococcus equi subsp. zooepidemicus (strain H70), this protein is 3-phosphoshikimate 1-carboxyvinyltransferase.